A 121-amino-acid polypeptide reads, in one-letter code: MTRQAGSSWLLRGLLLFALFASGVAPFNWDLPEPRSRASKIRVHPRGNLWATGHFMGKKSLEPPSLSLVGTAPPNTPRDQRLQLSHDLLRILLRKKALGMNFSGPAPPIQYRRLLEPLLQK.

Residues methionine 1 to valine 24 form the signal peptide. Methionine amide is present on methionine 56. The propeptide occupies serine 60 to lysine 121.

The protein belongs to the bombesin/neuromedin-B/ranatensin family. In the hindbrain, expressed in the medulla surrounding the lateral half of the facial nucleus. Also expressed in the olfactory bulb and hippocampus. Detected in a subset of neurons distributed throughout the retrotrapezoid nucleus/parafacial respiratory group (RTN/pFRG). Within the RTN/pFRG, expressed in neuronal subpopulations distinct from those expressing Grp. Expressed in lung.

Its subcellular location is the secreted. It localises to the cell projection. The protein localises to the neuron projection. Functionally, stimulates smooth muscle contraction. Induces sighing by acting directly on the pre-Botzinger complex, a cluster of several thousand neurons in the ventrolateral medulla responsible for inspiration during respiratory activity. Contributes to the induction of sneezing following exposure to chemical irritants or allergens which causes release of NMB by nasal sensory neurons and activation of NMBR-expressing neurons in the sneeze-evoking region of the brainstem. These in turn activate neurons of the caudal ventral respiratory group, giving rise to the sneeze reflex. Contributes to induction of acute itch, possibly through activation of the NMBR receptor on dorsal root ganglion neurons. Increases expression of NMBR and steroidogenic mediators STAR, CYP11A1 and HSD3B1 in Leydig cells, induces secretion of testosterone by Leydig cells and also promotes Leydig cell proliferation. Plays a role in the innate immune response to influenza A virus infection by enhancing interferon alpha expression and reducing expression of IL6. Plays a role in CSF1-induced proliferation of osteoclast precursors by contributing to the positive regulation of the expression of the CSF1 receptor CSF1R. This Mus musculus (Mouse) protein is Neuromedin-B (Nmb).